We begin with the raw amino-acid sequence, 378 residues long: Glutamate 5-kinase (378 aa).

Lysine 19 serves as a coordination point for ATP. Positions 60, 147, and 159 each coordinate substrate. ATP contacts are provided by residues 179 to 180 (SD) and 221 to 227 (SGGMRTK). Positions 285–362 (KGTLTIDAGA…GEMEQLLGYR (78 aa)) constitute a PUA domain.

It belongs to the glutamate 5-kinase family.

It is found in the cytoplasm. It catalyses the reaction L-glutamate + ATP = L-glutamyl 5-phosphate + ADP. It participates in amino-acid biosynthesis; L-proline biosynthesis; L-glutamate 5-semialdehyde from L-glutamate: step 1/2. Catalyzes the transfer of a phosphate group to glutamate to form L-glutamate 5-phosphate. The sequence is that of Glutamate 5-kinase from Gluconobacter oxydans (strain 621H) (Gluconobacter suboxydans).